The following is a 370-amino-acid chain: Phosphate acyltransferase (370 aa).

The segment at 349 to 370 is disordered; the sequence is SAGRAGQDAPDEMAAPGRSEKR.

Belongs to the PlsX family. In terms of assembly, homodimer. Probably interacts with PlsY.

It is found in the cytoplasm. It catalyses the reaction a fatty acyl-[ACP] + phosphate = an acyl phosphate + holo-[ACP]. It participates in lipid metabolism; phospholipid metabolism. In terms of biological role, catalyzes the reversible formation of acyl-phosphate (acyl-PO(4)) from acyl-[acyl-carrier-protein] (acyl-ACP). This enzyme utilizes acyl-ACP as fatty acyl donor, but not acyl-CoA. The protein is Phosphate acyltransferase of Cereibacter sphaeroides (strain ATCC 17029 / ATH 2.4.9) (Rhodobacter sphaeroides).